Here is a 763-residue protein sequence, read N- to C-terminus: ATP-dependent RNA helicase SUPV3L1, mitochondrial (763 aa).

A mitochondrion-targeting transit peptide spans 1-65 (MSVNRCIYLL…RPLDTSLFIP (65 aa)). The disordered stretch occupies residues 39–58 (RRTFDKLSTRHSSSGSSRPL). The region spanning 192 to 332 (EARAIQRKIV…AVDFITELMF (141 aa)) is the Helicase ATP-binding domain. An ATP-binding site is contributed by 205 to 212 (GPTNSGKT). In terms of domain architecture, Helicase C-terminal spans 354–519 (HAVESLDNLK…PTAEQIEMFA (166 aa)). 2 disordered regions span residues 679–721 (DSQP…KSSL) and 742–763 (EWAR…RKKK). Residues 680 to 697 (SQPTDTESNSSSTVPESE) show a composition bias toward polar residues.

It belongs to the helicase family. Mg(2+) serves as cofactor. The cofactor is Mn(2+).

The protein resides in the nucleus. It is found in the mitochondrion matrix. It localises to the mitochondrion nucleoid. The enzyme catalyses ATP + H2O = ADP + phosphate + H(+). Major helicase player in mitochondrial RNA metabolism. Component of the mitochondrial degradosome (mtEXO) complex, that degrades 3' overhang double-stranded RNA with a 3'-to-5' directionality in an ATP-dependent manner. ATPase and ATP-dependent multisubstrate helicase, able to unwind double-stranded (ds) DNA and RNA, and RNA/DNA heteroduplexes in the 5'-to-3' direction. Plays a role in the RNA surveillance system in mitochondria; regulates the stability of mature mRNAs, the removal of aberrantly formed mRNAs and the rapid degradation of non coding processing intermediates. Also implicated in recombination and chromatin maintenance pathways. May protect cells from apoptosis. Associates with mitochondrial DNA. This chain is ATP-dependent RNA helicase SUPV3L1, mitochondrial (supv3l1), found in Danio rerio (Zebrafish).